Consider the following 269-residue polypeptide: Regulatory protein RecX (269 aa).

The protein belongs to the RecX family.

Its subcellular location is the cytoplasm. Modulates RecA activity. The sequence is that of Regulatory protein RecX from Listeria monocytogenes serotype 4b (strain CLIP80459).